The sequence spans 305 residues: Glyceraldehyde-3-phosphate dehydrogenase 2, cytosolic (305 aa).

Residues Asp-3 and Arg-50 each coordinate NAD(+). Residues 121 to 123 (SCT), Thr-152, 181 to 182 (TG), and Arg-204 each bind D-glyceraldehyde 3-phosphate. The active-site Nucleophile is the Cys-122. Residue Asn-286 coordinates NAD(+).

This sequence belongs to the glyceraldehyde-3-phosphate dehydrogenase family. Homotetramer.

The protein resides in the cytoplasm. The catalysed reaction is D-glyceraldehyde 3-phosphate + phosphate + NAD(+) = (2R)-3-phospho-glyceroyl phosphate + NADH + H(+). It participates in carbohydrate degradation; glycolysis; pyruvate from D-glyceraldehyde 3-phosphate: step 1/5. In terms of biological role, key enzyme in glycolysis that catalyzes the first step of the pathway by converting D-glyceraldehyde 3-phosphate (G3P) into 3-phospho-D-glyceroyl phosphate. Essential for the maintenance of cellular ATP levels and carbohydrate metabolism. The polypeptide is Glyceraldehyde-3-phosphate dehydrogenase 2, cytosolic (GAPC) (Hordeum vulgare (Barley)).